The sequence spans 62 residues: Defensin BmKDfsin5 (62 aa).

A signal peptide spans 1-24 (MKVIALFFLFAFIFCTLEVAIVEA). 3 disulfide bridges follow: cysteine 28–cysteine 49, cysteine 35–cysteine 57, and cysteine 39–cysteine 59.

Belongs to the invertebrate defensin family. Type 2 subfamily. Highly expressed in non-venom gland (hemolymph) and moderately expressed in venom gland.

The protein resides in the secreted. Functionally, antibacterial peptide active against Gram-positive bacteria (including S.aureus ATCC25923 (MIC=2.5 uM), M.luteus AB93113 (MIC=2.5 uM), and the antibiotic-resistant S.epidermidis PRSE P1389 (MIC=1.25 uM)), but not against Gram-negative bacteria (including E.coli and P.aeruginosa). Also has weak blocking activity on Kv1.1/KCNA1 (8.7% inhibition), Kv1.2/KCNA2 (10.2% inhibition), Kv1.3/KCNA3 (9.0% inhibition), KCa3.1/KCNN4/IK (9.1% inhibition), KCa2.3/KCNN3/SK3 (46.3% inhibition) and Kv11.1/KCNH2/ERG1 (16.9% inhibition) channels (tested at 1 uM). It inhibits potassium channel current by interacting with the pore region. This Olivierus martensii (Manchurian scorpion) protein is Defensin BmKDfsin5.